The chain runs to 428 residues: Zinc-type alcohol dehydrogenase B (428 aa).

Zn(2+) contacts are provided by cysteine 116, histidine 137, cysteine 167, cysteine 170, cysteine 173, and cysteine 181. The residue at position 393 (lysine 393) is an N6-benzoyllysine.

The protein belongs to the zinc-containing alcohol dehydrogenase family. Class-III subfamily. Homodimer. Zn(2+) serves as cofactor. In terms of processing, benzoylation at lys-393 by gcnE leads to the activation od adhB.

The enzyme catalyses a primary alcohol + NAD(+) = an aldehyde + NADH + H(+). It carries out the reaction a secondary alcohol + NAD(+) = a ketone + NADH + H(+). Its function is as follows. Zinc-type alcohol dehydrogenase involved in development, secondary metabolism, pathogenicity, and stress response. Specifically controls the formation of sclerotia and the biosynthesis of aflatoxin. Contribute to seed colonization of A flavus on host maize seed. The sequence is that of Zinc-type alcohol dehydrogenase B from Aspergillus flavus (strain ATCC 200026 / FGSC A1120 / IAM 13836 / NRRL 3357 / JCM 12722 / SRRC 167).